Reading from the N-terminus, the 352-residue chain is N-lysine methyltransferase KMT5A (352 aa).

The tract at residues 21–51 (AVAATAPGPEMVERRGPGRPRTNGENVFTGQ) is disordered. Serine 59 carries the phosphoserine modification. Residues 87–202 (PLAGIYRKRD…KSKAELQSEE (116 aa)) form a disordered region. Positions 109-121 (MKAEEQKIKDARR) are enriched in basic and acidic residues. The residue at position 140 (threonine 140) is a Phosphothreonine. The span at 156-172 (GLKKPVRGKQAPRKKAQ) shows a compositional bias: basic residues. The SET domain maps to 216–337 (EGMKIDLIDG…AGEELLYDYG (122 aa)). Residues 226–228 (KGR), tyrosine 271, and 298–299 (NH) contribute to the S-adenosyl-L-methionine site.

This sequence belongs to the class V-like SAM-binding methyltransferase superfamily. Histone-lysine methyltransferase family. PR/SET subfamily. Interacts with L3MBTL1. Interacts with SIRT2 (phosphorylated form); the interaction is direct, stimulates KMT5A-mediated methyltransferase activity at histone H4 'Lys-20' (H4K20me1) and is increased in a H(2)O(2)-induced oxidative stress-dependent manner. Post-translationally, ubiquitinated and degraded by the DCX(DTL) complex.

The protein resides in the nucleus. The protein localises to the chromosome. It catalyses the reaction L-lysyl(20)-[histone H4] + S-adenosyl-L-methionine = N(6)-methyl-L-lysyl(20)-[histone H4] + S-adenosyl-L-homocysteine + H(+). The enzyme catalyses L-lysyl-[protein] + S-adenosyl-L-methionine = N(6)-methyl-L-lysyl-[protein] + S-adenosyl-L-homocysteine + H(+). In terms of biological role, protein-lysine N-methyltransferase that monomethylates both histones and non-histone proteins. Specifically monomethylates 'Lys-20' of histone H4 (H4K20me1). H4K20me1 is enriched during mitosis and represents a specific tag for epigenetic transcriptional repression. Mainly functions in euchromatin regions, thereby playing a central role in the silencing of euchromatic genes. Required for cell proliferation, probably by contributing to the maintenance of proper higher-order structure of DNA during mitosis. Involved in chromosome condensation and proper cytokinesis. Nucleosomes are preferred as substrate compared to free histones. Mediates monomethylation of p53/TP53 at 'Lys-382', leading to repress p53/TP53-target genes. Plays a negative role in TGF-beta response regulation and a positive role in cell migration. This is N-lysine methyltransferase KMT5A from Bos taurus (Bovine).